The following is a 117-amino-acid chain: UPF0102 protein FTW_1281 (117 aa).

It belongs to the UPF0102 family.

The sequence is that of UPF0102 protein FTW_1281 from Francisella tularensis subsp. tularensis (strain WY96-3418).